Consider the following 209-residue polypeptide: Fibroblast growth factor 10 (209 aa).

Residues 1 to 36 (MWKWILTHCASAFPHLPGCCCCFLLLFLVSSFPVTC) form the signal peptide. N50 and N197 each carry an N-linked (GlcNAc...) asparagine glycan.

The protein belongs to the heparin-binding growth factors family. Interacts with FGFR1 and FGFR2. Interacts with FGFBP1. In terms of tissue distribution, expressed abundantly in embryos and the lung, and at much lower levels in brain and heart.

Its subcellular location is the secreted. Plays an important role in the regulation of embryonic development, cell proliferation and cell differentiation. Required for normal branching morphogenesis. May play a role in wound healing. This is Fibroblast growth factor 10 (Fgf10) from Mus musculus (Mouse).